A 121-amino-acid chain; its full sequence is Small ribosomal subunit protein uS13 (121 aa).

Residues glycine 94–lysine 121 form a disordered region.

Belongs to the universal ribosomal protein uS13 family. In terms of assembly, part of the 30S ribosomal subunit. Forms a loose heterodimer with protein S19. Forms two bridges to the 50S subunit in the 70S ribosome.

Its function is as follows. Located at the top of the head of the 30S subunit, it contacts several helices of the 16S rRNA. In the 70S ribosome it contacts the 23S rRNA (bridge B1a) and protein L5 of the 50S subunit (bridge B1b), connecting the 2 subunits; these bridges are implicated in subunit movement. Contacts the tRNAs in the A and P-sites. This Delftia acidovorans (strain DSM 14801 / SPH-1) protein is Small ribosomal subunit protein uS13.